A 215-amino-acid chain; its full sequence is Adenylate kinase (215 aa).

Residue 10–15 (GAGKGT) participates in ATP binding. Residues 30–59 (STGDMFRAAIKEGTELGKQAKALMDQGKLV) form an NMP region. AMP contacts are provided by residues T31, R36, 57–59 (KLV), 85–88 (GFPR), and Q92. Positions 122–159 (GRRVHQPSGRTYHIIYNPPKVAGQDDITGEELITRADD) are LID. ATP contacts are provided by residues R123 and 132 to 133 (TY). AMP contacts are provided by R156 and R167. K200 provides a ligand contact to ATP.

It belongs to the adenylate kinase family. In terms of assembly, monomer.

It is found in the cytoplasm. The catalysed reaction is AMP + ATP = 2 ADP. It participates in purine metabolism; AMP biosynthesis via salvage pathway; AMP from ADP: step 1/1. Its function is as follows. Catalyzes the reversible transfer of the terminal phosphate group between ATP and AMP. Plays an important role in cellular energy homeostasis and in adenine nucleotide metabolism. In Haemophilus ducreyi (strain 35000HP / ATCC 700724), this protein is Adenylate kinase.